Here is a 368-residue protein sequence, read N- to C-terminus: Spermidine/putrescine import ATP-binding protein PotA (368 aa).

The 231-residue stretch at 8–238 (IELKNVSKIF…PVNLFVARFV (231 aa)) folds into the ABC transporter domain. 40–47 (GPSGCGKT) serves as a coordination point for ATP.

This sequence belongs to the ABC transporter superfamily. Spermidine/putrescine importer (TC 3.A.1.11.1) family. As to quaternary structure, the complex is composed of two ATP-binding proteins (PotA), two transmembrane proteins (PotB and PotC) and a solute-binding protein (PotD).

The protein resides in the cell membrane. It carries out the reaction ATP + H2O + polyamine-[polyamine-binding protein]Side 1 = ADP + phosphate + polyamineSide 2 + [polyamine-binding protein]Side 1.. Part of the ABC transporter complex PotABCD involved in spermidine/putrescine import. Responsible for energy coupling to the transport system. This is Spermidine/putrescine import ATP-binding protein PotA from Lawsonia intracellularis (strain PHE/MN1-00).